Here is a 662-residue protein sequence, read N- to C-terminus: Rap guanine nucleotide exchange factor-like 1 (662 aa).

The tract at residues 1–149 (MKPLEKFLKK…PPWAPLGAPE (149 aa)) is disordered. The span at 20–48 (VAGGPGGGLGSCGGPGGGGGPGGGGGPAG) shows a compositional bias: gly residues. Positions 49–64 (GQRSLQRRQSVSRLLL) are enriched in low complexity. Residues 73 to 82 (AEPGLEPPVP) are compositionally biased toward pro residues. Over residues 120-135 (LRSPSSYSSDELSPGE) the composition is skewed to low complexity. In terms of domain architecture, Ras-GEF spans 424 to 660 (EPEDVANHLT…FELSYKLEAN (237 aa)).

Its function is as follows. Probable guanine nucleotide exchange factor (GEF). The sequence is that of Rap guanine nucleotide exchange factor-like 1 (RAPGEFL1) from Homo sapiens (Human).